The primary structure comprises 271 residues: Hachiman protein HamA (271 aa).

Component of antiviral defense system Hachiman, composed of HamA and HamB. Expression of Hachiman in B.subtilis (strain BEST7003) confers resistance to phages phi105, phi29, phi3T, rho14, SBSphiJ, SpBeta and SPR. This is Hachiman protein HamA from Bacillus cereus.